A 254-amino-acid chain; its full sequence is Probable phosphatase Sbal_1472 (254 aa).

Residues H8, H10, H16, H41, E74, H102, H132, D193, and H195 each contribute to the Zn(2+) site.

Belongs to the PHP family. Requires Zn(2+) as cofactor.

In Shewanella baltica (strain OS155 / ATCC BAA-1091), this protein is Probable phosphatase Sbal_1472.